The following is an 86-amino-acid chain: Conotoxin S6.10 (86 aa).

A signal peptide spans Met1 to Ala22. Positions Lys23 to Thr45 are excised as a propeptide. 3 cysteine pairs are disulfide-bonded: Cys48-Cys62, Cys55-Cys66, and Cys61-Cys73.

This sequence belongs to the conotoxin O1 superfamily. In terms of tissue distribution, expressed by the venom duct.

The protein localises to the secreted. In Conus striatus (Striated cone), this protein is Conotoxin S6.10.